The primary structure comprises 283 residues: tRNA pseudouridine synthase B (283 aa).

Asp38 acts as the Nucleophile in catalysis.

The protein belongs to the pseudouridine synthase TruB family. Type 1 subfamily.

It carries out the reaction uridine(55) in tRNA = pseudouridine(55) in tRNA. In terms of biological role, responsible for synthesis of pseudouridine from uracil-55 in the psi GC loop of transfer RNAs. In Onion yellows phytoplasma (strain OY-M), this protein is tRNA pseudouridine synthase B.